We begin with the raw amino-acid sequence, 325 residues long: 5-dehydro-2-deoxygluconokinase (325 aa).

This sequence belongs to the carbohydrate kinase PfkB family.

The catalysed reaction is 5-dehydro-2-deoxy-D-gluconate + ATP = 6-phospho-5-dehydro-2-deoxy-D-gluconate + ADP + H(+). It participates in polyol metabolism; myo-inositol degradation into acetyl-CoA; acetyl-CoA from myo-inositol: step 5/7. Functionally, catalyzes the phosphorylation of 5-dehydro-2-deoxy-D-gluconate (2-deoxy-5-keto-D-gluconate or DKG) to 6-phospho-5-dehydro-2-deoxy-D-gluconate (DKGP). The sequence is that of 5-dehydro-2-deoxygluconokinase from Listeria monocytogenes serotype 4b (strain CLIP80459).